The chain runs to 450 residues: tRNA modification GTPase MnmE (450 aa).

(6S)-5-formyl-5,6,7,8-tetrahydrofolate is bound by residues Lys21, Glu78, and Lys117. The region spanning Gly213–Pro376 is the TrmE-type G domain. A K(+)-binding site is contributed by Asn223. GTP-binding positions include Asn223–Ser228, Ser242–Thr248, and Asp267–Gly270. Position 227 (Ser227) interacts with Mg(2+). 3 residues coordinate K(+): Ser242, Ile244, and Thr247. A Mg(2+)-binding site is contributed by Thr248. Lys450 is a binding site for (6S)-5-formyl-5,6,7,8-tetrahydrofolate.

Belongs to the TRAFAC class TrmE-Era-EngA-EngB-Septin-like GTPase superfamily. TrmE GTPase family. As to quaternary structure, homodimer. Heterotetramer of two MnmE and two MnmG subunits. The cofactor is K(+).

The protein resides in the cytoplasm. In terms of biological role, exhibits a very high intrinsic GTPase hydrolysis rate. Involved in the addition of a carboxymethylaminomethyl (cmnm) group at the wobble position (U34) of certain tRNAs, forming tRNA-cmnm(5)s(2)U34. The protein is tRNA modification GTPase MnmE of Helicobacter pylori (strain Shi470).